A 215-amino-acid polypeptide reads, in one-letter code: Thymidylate kinase (215 aa).

11–18 is a binding site for ATP; that stretch reads GIDGAGKS.

This sequence belongs to the thymidylate kinase family.

The enzyme catalyses dTMP + ATP = dTDP + ADP. In terms of biological role, phosphorylation of dTMP to form dTDP in both de novo and salvage pathways of dTTP synthesis. This Nitrosomonas europaea (strain ATCC 19718 / CIP 103999 / KCTC 2705 / NBRC 14298) protein is Thymidylate kinase.